Reading from the N-terminus, the 624-residue chain is UvrABC system protein C (624 aa).

The GIY-YIG domain maps to 27 to 105 (LSPGVYRMLS…IKSLGPRYNI (79 aa)). Residues 215–250 (RRVQHDLTARMESAAEAMEYEAAAVFRDRIRALTRI) form the UVR domain.

Belongs to the UvrC family. In terms of assembly, interacts with UvrB in an incision complex.

It localises to the cytoplasm. Functionally, the UvrABC repair system catalyzes the recognition and processing of DNA lesions. UvrC both incises the 5' and 3' sides of the lesion. The N-terminal half is responsible for the 3' incision and the C-terminal half is responsible for the 5' incision. This Paramagnetospirillum magneticum (strain ATCC 700264 / AMB-1) (Magnetospirillum magneticum) protein is UvrABC system protein C.